Consider the following 135-residue polypeptide: DNA-binding protein H-NS homolog (135 aa).

Residues 112–117 mediate DNA binding; it reads QGRTPS.

This sequence belongs to the histone-like protein H-NS family. In terms of assembly, homodimer that oligomerizes on DNA into higher-order complexes that form bridges between disparate regions of DNA compacting it.

It localises to the cytoplasm. Its subcellular location is the nucleoid. In terms of biological role, a DNA-binding protein implicated in transcriptional repression and chromosome organization and compaction. Binds nucleation sites in AT-rich DNA and bridges them, forming higher-order nucleoprotein complexes and condensing the chromosome. A subset of genes are repressed by H-NS in association with other proteins. This chain is DNA-binding protein H-NS homolog (hns), found in Buchnera aphidicola subsp. Acyrthosiphon pisum (strain APS) (Acyrthosiphon pisum symbiotic bacterium).